We begin with the raw amino-acid sequence, 620 residues long: 1-deoxy-D-xylulose-5-phosphate synthase (620 aa).

Residues H75 and 116 to 118 contribute to the thiamine diphosphate site; that span reads AHS. D147 contributes to the Mg(2+) binding site. Thiamine diphosphate is bound by residues 148-149, N177, Y284, and E366; that span reads GA. Position 177 (N177) interacts with Mg(2+).

This sequence belongs to the transketolase family. DXPS subfamily. Homodimer. The cofactor is Mg(2+). Thiamine diphosphate serves as cofactor.

It carries out the reaction D-glyceraldehyde 3-phosphate + pyruvate + H(+) = 1-deoxy-D-xylulose 5-phosphate + CO2. Its pathway is metabolic intermediate biosynthesis; 1-deoxy-D-xylulose 5-phosphate biosynthesis; 1-deoxy-D-xylulose 5-phosphate from D-glyceraldehyde 3-phosphate and pyruvate: step 1/1. Catalyzes the acyloin condensation reaction between C atoms 2 and 3 of pyruvate and glyceraldehyde 3-phosphate to yield 1-deoxy-D-xylulose-5-phosphate (DXP). This is 1-deoxy-D-xylulose-5-phosphate synthase from Bordetella avium (strain 197N).